The chain runs to 192 residues: Xanthine phosphoribosyltransferase (192 aa).

The xanthine site is built by L20 and N27. 128 to 132 (ANGDA) is a 5-phospho-alpha-D-ribose 1-diphosphate binding site. Residue K156 coordinates xanthine.

Belongs to the purine/pyrimidine phosphoribosyltransferase family. Xpt subfamily. As to quaternary structure, homodimer.

It localises to the cytoplasm. It catalyses the reaction XMP + diphosphate = xanthine + 5-phospho-alpha-D-ribose 1-diphosphate. It participates in purine metabolism; XMP biosynthesis via salvage pathway; XMP from xanthine: step 1/1. Functionally, converts the preformed base xanthine, a product of nucleic acid breakdown, to xanthosine 5'-monophosphate (XMP), so it can be reused for RNA or DNA synthesis. The polypeptide is Xanthine phosphoribosyltransferase (Staphylococcus carnosus (strain TM300)).